Consider the following 781-residue polypeptide: Mitochondrial inner membrane m-AAA protease component paraplegin (781 aa).

A mitochondrion-targeting transit peptide spans 1–43; it reads MAAALLLLRGLRPGPEPRPRRLWGLLSGRGPGLSSGAGARRPY. Disordered stretches follow at residues 22–56 and 103–135; these read LWGLLSGRGPGLSSGAGARRPYAARGTPVGPAAAG and TSRMKQKNKDNDKPKGKTPEDDEEEKRRKERED. The segment covering 36–56 has biased composition (low complexity); that stretch reads GAGARRPYAARGTPVGPAAAG. A propeptide spans 44 to 105 (removed in mature form); the sequence is AARGTPVGPA…GSTLYFNTSR (62 aa). The Mitochondrial matrix segment spans residues 106–144; the sequence is MKQKNKDNDKPKGKTPEDDEEEKRRKEREDQMYRERLRT. Basic and acidic residues predominate over residues 109-135; the sequence is KNKDNDKPKGKTPEDDEEEKRRKERED. The helical transmembrane segment at 145 to 165 threads the bilayer; the sequence is LFIIALVMSLLNSLSTSGGSI. Topologically, residues 166–248 are mitochondrial intermembrane; sequence SWADFVNEML…DRIPVSYKRT (83 aa). Residues 249–269 traverse the membrane as a helical segment; sequence GFFGNALYALGMTAVGLAILW. Residues 270-781 are Mitochondrial matrix-facing; that stretch reads YVFRLAGMTG…ASGEEEAPAP (512 aa). ATP-binding residues include Ala312, Gly352, Cys353, Gly354, Lys355, Thr356, and Leu357. Position 505 is a 3'-nitrotyrosine (Tyr505). His574 lines the Zn(2+) pocket. The active site involves Glu575. 2 residues coordinate Zn(2+): His578 and Asp650. The interaction with PPIF stretch occupies residues 701 to 781; sequence HEAKLLVAKA…ASGEEEAPAP (81 aa).

This sequence in the N-terminal section; belongs to the AAA ATPase family. The protein in the C-terminal section; belongs to the peptidase M41 family. As to quaternary structure, forms heterohexamers with SPG7 and AFG3L1. The m-AAA protease is either composed of homohexamers of AFG3L2 or heterohexamers of AFG3L1, AFG3L2 and/or SPG7. Component of the mitochondrial permeability transition pore complex (mPTPC), at least composed of SPG7, VDAC1 and PPIF. Interacts with MAIP1. Requires Zn(2+) as cofactor. In terms of processing, upon import into the mitochondrion, the N-terminal transit peptide is cleaved by the mitochondrial-processing peptidase (MPP) to generate an intermediate form which undergoes a second proteolytic cleavage mediated by proteases AFG3L1 and/or AFG3L2 removing an additional N-terminal fragment to generate the proteolytically active mature form. Expressed in the brain and retina (at protein level).

Its subcellular location is the mitochondrion inner membrane. It catalyses the reaction ATP + H2O = ADP + phosphate + H(+). Catalytic component of the m-AAA protease, a protease that plays a key role in proteostasis of inner mitochondrial membrane proteins, and which is essential for axonal and neuron development. SPG7 possesses both ATPase and protease activities: the ATPase activity is required to unfold substrates, threading them into the internal proteolytic cavity for hydrolysis into small peptide fragments. The m-AAA protease exerts a dual role in the mitochondrial inner membrane: it mediates the processing of specific regulatory proteins and ensures protein quality control by degrading misfolded polypeptides. Mediates protein maturation of the mitochondrial ribosomal subunit MRPL32/bL32m by catalyzing the cleavage of the presequence of MRPL32/bL32m prior to assembly into the mitochondrial ribosome. Acts as a regulator of calcium in neurons by mediating degradation of SMDT1/EMRE before its assembly with the uniporter complex, limiting the availability of SMDT1/EMRE for MCU assembly and promoting efficient assembly of gatekeeper subunits with MCU. Also regulates mitochondrial calcium by catalyzing degradation of MCU. Plays a role in the formation and regulation of the mitochondrial permeability transition pore (mPTP) and its proteolytic activity is dispensable for this function. The sequence is that of Mitochondrial inner membrane m-AAA protease component paraplegin from Mus musculus (Mouse).